Here is a 184-residue protein sequence, read N- to C-terminus: Gastrokine-2 (184 aa).

The first 20 residues, 1–20, serve as a signal peptide directing secretion; the sequence is MKSLVAFLVVLSILRIQSQA. A BRICHOS domain is found at 54-151; the sequence is HSGSCSSTTI…LCKHIPLYEG (98 aa). A disulfide bridge connects residues cysteine 81 and cysteine 143.

Heterodimer with TFF1; disulfide linked. Interacts with TFF2.

The protein localises to the secreted. The polypeptide is Gastrokine-2 (Gkn2) (Rattus norvegicus (Rat)).